Reading from the N-terminus, the 149-residue chain is Large ribosomal subunit protein uL13 (149 aa).

Belongs to the universal ribosomal protein uL13 family. In terms of assembly, part of the 50S ribosomal subunit.

In terms of biological role, this protein is one of the early assembly proteins of the 50S ribosomal subunit, although it is not seen to bind rRNA by itself. It is important during the early stages of 50S assembly. The protein is Large ribosomal subunit protein uL13 of Bifidobacterium longum (strain DJO10A).